The primary structure comprises 544 residues: Chaperonin GroEL 2 (544 aa).

ATP is bound by residues 29-32 (TLGP), 86-90 (DGTTT), Gly413, 479-481 (NAA), and Asp495.

The protein belongs to the chaperonin (HSP60) family. As to quaternary structure, forms a cylinder of 14 subunits composed of two heptameric rings stacked back-to-back. Interacts with the co-chaperonin GroES.

Its subcellular location is the cytoplasm. It catalyses the reaction ATP + H2O + a folded polypeptide = ADP + phosphate + an unfolded polypeptide.. Functionally, together with its co-chaperonin GroES, plays an essential role in assisting protein folding. The GroEL-GroES system forms a nano-cage that allows encapsulation of the non-native substrate proteins and provides a physical environment optimized to promote and accelerate protein folding. In Prochlorococcus marinus (strain MIT 9313), this protein is Chaperonin GroEL 2.